The chain runs to 418 residues: Mitochondrial outer membrane protein SLC25A46 (418 aa).

A disordered region spans residues 1 to 30; sequence MHPRRPDGFDGLGYRGGARDEQGFGGAFPA. At Ser-32 the chain carries Phosphoserine. A disordered region spans residues 44 to 93; it reads TTPPDIPGSRNLHWGEKSPPYGVPTTSTPYEGPTEEPFSSGGGGSVQGQS. Thr-45 carries the phosphothreonine modification. The Solcar 1 repeat unit spans residues 96-187; that stretch reads QLNRFAGFGI…GIISEFTPLP (92 aa). 6 helical membrane passes run 103-123, 167-187, 202-222, 258-278, 314-334, and 382-402; these read FGIG…CIVL, FIVQ…TPLP, HLLL…ASLI, LLPL…HYII, FPEL…LYPL, and VFGF…HAAV. A Solcar 2 repeat occupies 311–413; it reads DAYFPELIAN…QITKIIYSTL (103 aa).

This sequence belongs to the mitochondrial carrier (TC 2.A.29) family. In terms of assembly, associates with the mitochondrial contact site and cristae organizing system (MICOS) complex. May associate with the endoplasmic reticulum membrane protein complex (EMC).

It is found in the mitochondrion outer membrane. Its function is as follows. Transmembrane protein of the mitochondrial outer membrane that controls mitochondrial organization. May regulate the assembly of the MICOS (mitochondrial contact site and cristae organizing system) complex which is essential to the biogenesis and dynamics of mitochondrial cristae, the inwards folds of the inner mitochondrial membrane. Through its interaction with the EMC (endoplasmic reticulum membrane protein complex), could regulate mitochondrial lipid homeostasis and thereby mitochondrial fission. This chain is Mitochondrial outer membrane protein SLC25A46, found in Homo sapiens (Human).